The chain runs to 152 residues: Xanthine-guanine phosphoribosyltransferase (152 aa).

5-phospho-alpha-D-ribose 1-diphosphate contacts are provided by residues Arg37–Gly38, Arg69, and Asp88–Thr96. Position 69 (Arg69) interacts with GMP. Asp89 is a Mg(2+) binding site. Guanine contacts are provided by Asp92 and Ile135. Residues Asp92 and Ile135 each coordinate xanthine. Residues Asp92 to Thr96 and Trp134 to Ile135 contribute to the GMP site.

The protein belongs to the purine/pyrimidine phosphoribosyltransferase family. XGPT subfamily. Homotetramer. It depends on Mg(2+) as a cofactor.

The protein localises to the cell inner membrane. The catalysed reaction is GMP + diphosphate = guanine + 5-phospho-alpha-D-ribose 1-diphosphate. It carries out the reaction XMP + diphosphate = xanthine + 5-phospho-alpha-D-ribose 1-diphosphate. It catalyses the reaction IMP + diphosphate = hypoxanthine + 5-phospho-alpha-D-ribose 1-diphosphate. It functions in the pathway purine metabolism; GMP biosynthesis via salvage pathway; GMP from guanine: step 1/1. It participates in purine metabolism; XMP biosynthesis via salvage pathway; XMP from xanthine: step 1/1. Its function is as follows. Purine salvage pathway enzyme that catalyzes the transfer of the ribosyl-5-phosphate group from 5-phospho-alpha-D-ribose 1-diphosphate (PRPP) to the N9 position of the 6-oxopurines guanine and xanthine to form the corresponding ribonucleotides GMP (guanosine 5'-monophosphate) and XMP (xanthosine 5'-monophosphate), with the release of PPi. To a lesser extent, also acts on hypoxanthine. The polypeptide is Xanthine-guanine phosphoribosyltransferase (Photobacterium profundum (strain SS9)).